Reading from the N-terminus, the 129-residue chain is Ribulose bisphosphate carboxylase small subunit (129 aa).

Positions 109-129 (LRMTRTESNGRSQHYMWETQR) are disordered.

It belongs to the RuBisCO small chain family. In terms of assembly, heterohexadecamer of 8 large and 8 small subunits.

Functionally, ruBisCO catalyzes two reactions: the carboxylation of D-ribulose 1,5-bisphosphate, the primary event in carbon dioxide fixation, as well as the oxidative fragmentation of the pentose substrate. Both reactions occur simultaneously and in competition at the same active site. Although the small subunit is not catalytic it is essential for maximal activity. The polypeptide is Ribulose bisphosphate carboxylase small subunit (Rhizobium meliloti (strain 1021) (Ensifer meliloti)).